The following is a 989-amino-acid chain: MESFQQIKNNKVDLISTNDPLDKNRLLIEDLWESVLREECPDDQAERLIQLKELSYSKQIEGDSSKTFKKEIVDIVNSMDLAESIAAARAFSLYFQLVNILEQRVEEDRYIQSFTNKNVQKSPDNLDPFAPALARQNAPVTFRELFYRLRKLNVPPGKLEELLQEMDIRLVFTAHPTEIVRHTIRHKQTRVANLLKKIQVEQFLTKEEKNFLKIQLKEEVRLWWRTDELHQFKPSVLDEVDYALHYFQQVLFNAMPQLRGRIAEALTENYPDVQLPSQSFCNFGSWVGSDRDGNPSVTPEITWRTACYQRQLMLERYITATSHLRDQLSVSMQWSQVSSSLLESLETDRVKFPAIYEARATRYRSEPYRLKLSYILEKLRLTQERNNLLADNGWKFDLEGELNTKNIDKVENLYYKSVNEFTYDLELIKNSLISTDLTCEAVNTLLTQVHIFGFSLASLDIRQESTRHSDAIQELTKYLDLSVQYDQMSEDEKIKWLVDELNTKRPLIPSDVKWTNTTEETFSVFKMVKRLQQEFGSRICHAYVISMSHSASDLLEVLLLAKEMGLLDQNSKNSNLLVVPLFETVEDLKRAPEVMEKLFKLDFYKSLLPKVGESFKPLQELMLGYSDSNKDSGFVSSNWEIHRAQIALQNLASRNNILLRLFHGRGGSVGRGGGPAYQAILAQPSGTLKGRIKITEQGEVLASKYSLPELALYNLETVTTAVIQNSLVNNRLDATPEWNQLMSRLAETSRSHYRKLVYENPDLLNFFQEVTPIEEISKLQISSRPARRKKGAKDLSSLRAIPWVFGWTQSRFLLPSWFGVGTALSSELNSDPQQIELLRVLHQRWPFFRMLISKVEMTLSKVDLEVAKYYVDTLGSEENKDSFDDIFEVISKEYSLTKSLVLEITGKNKLLESDRDLKSSVSLRNKTIIPLGFLQVSLLRRLRDQTRQPPISEFLIDKDESRRAYSRSELLRGALLTINGIAAGMRNTG.

Active-site residues include histidine 175 and lysine 630.

The protein belongs to the PEPCase type 1 family. Requires Mg(2+) as cofactor.

It catalyses the reaction oxaloacetate + phosphate = phosphoenolpyruvate + hydrogencarbonate. In terms of biological role, forms oxaloacetate, a four-carbon dicarboxylic acid source for the tricarboxylic acid cycle. This is Phosphoenolpyruvate carboxylase from Prochlorococcus marinus (strain MIT 9312).